Reading from the N-terminus, the 495-residue chain is Leucine aminopeptidase 2 (495 aa).

A signal peptide spans 1-21 (MKSQLLSLAVAVTTISQGVVG). Positions 124–218 (PPASKIMAEL…EDGKNLATLV (95 aa)) constitute a PA domain. N-linked (GlcNAc...) asparagine glycans are attached at residues asparagine 142 and asparagine 235. Positions 259 and 271 each coordinate Zn(2+). Residue asparagine 272 is glycosylated (N-linked (GlcNAc...) asparagine). Catalysis depends on glutamate 303, which acts as the Proton acceptor. Zn(2+) is bound by residues glutamate 304 and aspartate 332. Asparagine 352 carries an N-linked (GlcNAc...) asparagine glycan. Histidine 430 serves as a coordination point for Zn(2+).

This sequence belongs to the peptidase M28 family. M28A subfamily. In terms of assembly, monomer. It depends on Zn(2+) as a cofactor.

The protein resides in the secreted. With respect to regulation, activity is inhibited by EDTA, o-phenanthroline, bestatin and amastatin. Functionally, extracellular aminopeptidase that releases a wide variety of amino acids from natural peptides and contributes to pathogenicity. The protein is Leucine aminopeptidase 2 (LAP2) of Trichophyton rubrum (Athlete's foot fungus).